We begin with the raw amino-acid sequence, 420 residues long: MTKDQQNIERGSVINVEILNAAHGGQGIAKYDGRVIFVKGAFPGDRLSANITHVKKKFARATIASIEMPSPLRMQQRCLAAANGAGCCDFGEFDPEIEGRYKADLVLEQLERLGKVSQPPTCEVVSFGSPTQWRTRMRLGVDAQGRAGGFASQSREVVSGVPCSQGVMGLLDGIVGAEQNVLRFTPGSQVVVVCDDLGQRTVVETQPAPRGKRTESMVKVVEGTGKVSQVVDGVTFELPATGFWQSHKDAAQAYADTIREWFGSLIIRNTDSSLVAWDLYGGCGSFASAILSAVDNHGVVHCVESAPAAVSAGKRALSQLVEDQKIVFHTETVERAMNQLPAPTLVVLDPPRVGAGAETVRAIAQSGPQAAIHIGCDPATFARDIAEWSRNGFILEKLRVFDAFPGTHHCETIGLLTKKN.

One can recognise a TRAM domain in the interval 7–65 (NIERGSVINVEILNAAHGGQGIAKYDGRVIFVKGAFPGDRLSANITHVKKKFARATIAS). S-adenosyl-L-methionine contacts are provided by Gln-245, Tyr-280, Glu-304, and Asp-349. Cys-376 functions as the Nucleophile in the catalytic mechanism.

It belongs to the class I-like SAM-binding methyltransferase superfamily. RNA M5U methyltransferase family.

This is an uncharacterized protein from Corynebacterium diphtheriae (strain ATCC 700971 / NCTC 13129 / Biotype gravis).